The following is a 282-amino-acid chain: Deoxyribonuclease-1 (282 aa).

An N-terminal signal peptide occupies residues 1-20 (MARLVLELLAAALLLRVAAT). A glycan (N-linked (GlcNAc...) asparagine) is linked at asparagine 38. Glutamate 98 is a catalytic residue. Cysteine 121 and cysteine 124 are joined by a disulfide. The active site involves histidine 154. Cysteine 193 and cysteine 229 are oxidised to a cystine.

The protein belongs to the DNase I family. Requires Ca(2+) as cofactor. The cofactor is Mg(2+). N-glycosylated.

The protein localises to the secreted. The protein resides in the zymogen granule. It is found in the nucleus envelope. It catalyses the reaction Endonucleolytic cleavage to 5'-phosphodinucleotide and 5'-phosphooligonucleotide end-products.. In terms of biological role, serum endocuclease secreted into body fluids by a wide variety of exocrine and endocrine organs. Expressed by non-hematopoietic tissues and preferentially cleaves protein-free DNA. Among other functions, seems to be involved in cell death by apoptosis. Binds specifically to G-actin and blocks actin polymerization. The chain is Deoxyribonuclease-1 (DNASE1) from Gallus gallus (Chicken).